Here is a 305-residue protein sequence, read N- to C-terminus: tRNA-cytidine(32) 2-sulfurtransferase (305 aa).

The tract at residues 1-20 is disordered; it reads MTAVLPLPQPLADPAPRDPR. Residues 59 to 64 carry the PP-loop motif motif; the sequence is SGGKDS. Residues cysteine 134, cysteine 137, and cysteine 225 each contribute to the [4Fe-4S] cluster site. Positions 282-293 are enriched in low complexity; that stretch reads DAPSDVDPDPSA. A disordered region spans residues 282-305; the sequence is DAPSDVDPDPSAWLSASHAPHDSD.

This sequence belongs to the TtcA family. As to quaternary structure, homodimer. Requires Mg(2+) as cofactor. The cofactor is [4Fe-4S] cluster.

Its subcellular location is the cytoplasm. The catalysed reaction is cytidine(32) in tRNA + S-sulfanyl-L-cysteinyl-[cysteine desulfurase] + AH2 + ATP = 2-thiocytidine(32) in tRNA + L-cysteinyl-[cysteine desulfurase] + A + AMP + diphosphate + H(+). It participates in tRNA modification. Functionally, catalyzes the ATP-dependent 2-thiolation of cytidine in position 32 of tRNA, to form 2-thiocytidine (s(2)C32). The sulfur atoms are provided by the cysteine/cysteine desulfurase (IscS) system. In Xanthomonas euvesicatoria pv. vesicatoria (strain 85-10) (Xanthomonas campestris pv. vesicatoria), this protein is tRNA-cytidine(32) 2-sulfurtransferase.